A 181-amino-acid polypeptide reads, in one-letter code: Kappa-casein (181 aa).

A signal peptide spans 1 to 21 (MMRNFIVVVNILALTLPFLAA). T123 carries the phosphothreonine modification. O-linked (GalNAc...) threonine glycans are attached at residues T134, T144, and T155. S162 is modified (phosphoserine; alternate). S162 carries O-linked (GalNAc...) serine; alternate glycosylation. Phosphoserine is present on S178.

Belongs to the kappa-casein family. In terms of tissue distribution, mammary gland specific. Secreted in milk.

It localises to the secreted. Kappa-casein stabilizes micelle formation, preventing casein precipitation in milk. The polypeptide is Kappa-casein (Csn3) (Mus musculus (Mouse)).